A 701-amino-acid chain; its full sequence is Cytosolic endo-beta-N-acetylglucosaminidase 2 (701 aa).

It belongs to the glycosyl hydrolase 85 family.

It is found in the cytoplasm. The protein localises to the cytosol. It carries out the reaction an N(4)-(oligosaccharide-(1-&gt;3)-[oligosaccharide-(1-&gt;6)]-beta-D-Man-(1-&gt;4)-beta-D-GlcNAc-(1-&gt;4)-alpha-D-GlcNAc)-L-asparaginyl-[protein] + H2O = an oligosaccharide-(1-&gt;3)-[oligosaccharide-(1-&gt;6)]-beta-D-Man-(1-&gt;4)-D-GlcNAc + N(4)-(N-acetyl-beta-D-glucosaminyl)-L-asparaginyl-[protein]. Endoglycosidase that releases N-glycans from glycoproteins by cleaving the beta-1,4-glycosidic bond in the N,N'-diacetylchitobiose core. Involved in the production of high-mannose type N-glycans during plant development and fruit maturation. The chain is Cytosolic endo-beta-N-acetylglucosaminidase 2 from Arabidopsis thaliana (Mouse-ear cress).